Here is a 270-residue protein sequence, read N- to C-terminus: Elongation factor Ts (270 aa).

The tract at residues 75–78 is involved in Mg(2+) ion dislocation from EF-Tu; it reads TDFV.

It belongs to the EF-Ts family.

The protein resides in the cytoplasm. Its function is as follows. Associates with the EF-Tu.GDP complex and induces the exchange of GDP to GTP. It remains bound to the aminoacyl-tRNA.EF-Tu.GTP complex up to the GTP hydrolysis stage on the ribosome. The sequence is that of Elongation factor Ts from Cutibacterium acnes (strain DSM 16379 / KPA171202) (Propionibacterium acnes).